Consider the following 147-residue polypeptide: Small ribosomal subunit protein bS6 (147 aa).

Positions 97–141 are enriched in basic and acidic residues; the sequence is EEGPSAMMRKADRDRERDDRGGGFRGDREGGFRGDRGPRRPREEA. The segment at 97–147 is disordered; sequence EEGPSAMMRKADRDRERDDRGGGFRGDREGGFRGDRGPRRPREEAPAVVEE.

Belongs to the bacterial ribosomal protein bS6 family.

Its function is as follows. Binds together with bS18 to 16S ribosomal RNA. The chain is Small ribosomal subunit protein bS6 from Nitrobacter hamburgensis (strain DSM 10229 / NCIMB 13809 / X14).